Reading from the N-terminus, the 325-residue chain is DNA-directed RNA polymerase subunit alpha (325 aa).

The tract at residues 1–231 (MQTSLLKPKI…DQLSVFAALE (231 aa)) is alpha N-terminal domain (alpha-NTD). An alpha C-terminal domain (alpha-CTD) region spans residues 246–325 (IDPILLRPVD…ENWPPAGLDK (80 aa)).

This sequence belongs to the RNA polymerase alpha chain family. As to quaternary structure, homodimer. The RNAP catalytic core consists of 2 alpha, 1 beta, 1 beta' and 1 omega subunit. When a sigma factor is associated with the core the holoenzyme is formed, which can initiate transcription.

It catalyses the reaction RNA(n) + a ribonucleoside 5'-triphosphate = RNA(n+1) + diphosphate. Functionally, DNA-dependent RNA polymerase catalyzes the transcription of DNA into RNA using the four ribonucleoside triphosphates as substrates. The polypeptide is DNA-directed RNA polymerase subunit alpha (Paraburkholderia phymatum (strain DSM 17167 / CIP 108236 / LMG 21445 / STM815) (Burkholderia phymatum)).